The following is a 434-amino-acid chain: Nicotinate phosphoribosyltransferase (434 aa).

Position 242 is a phosphohistidine; by autocatalysis (His242).

Belongs to the NAPRTase family. Transiently phosphorylated on a His residue during the reaction cycle. Phosphorylation strongly increases the affinity for substrates and increases the rate of nicotinate D-ribonucleotide production. Dephosphorylation regenerates the low-affinity form of the enzyme, leading to product release.

The catalysed reaction is nicotinate + 5-phospho-alpha-D-ribose 1-diphosphate + ATP + H2O = nicotinate beta-D-ribonucleotide + ADP + phosphate + diphosphate. Its pathway is cofactor biosynthesis; NAD(+) biosynthesis; nicotinate D-ribonucleotide from nicotinate: step 1/1. In terms of biological role, catalyzes the synthesis of beta-nicotinate D-ribonucleotide from nicotinate and 5-phospho-D-ribose 1-phosphate at the expense of ATP. This chain is Nicotinate phosphoribosyltransferase, found in Bradyrhizobium sp. (strain BTAi1 / ATCC BAA-1182).